Consider the following 284-residue polypeptide: Phosphatidylglycerol--prolipoprotein diacylglyceryl transferase (284 aa).

The next 7 membrane-spanning stretches (helical) occupy residues 18-38, 62-82, 106-126, 136-156, 190-210, 218-238, and 252-272; these read LGGIEVHWYGLAYACAIVIAF, YFLWAELGIVLGARIGYVLIY, FVGIRGMSYHGGLVGFLIASY, LLIYLDLIAISLPLGYVFGRI, PSQLIEAFLEGVIVFLMVLWA, GLLIVVYGLGYSLMRFIAEFY, and LSMGQILSLFMVVVSLGILLY. R155 contacts a 1,2-diacyl-sn-glycero-3-phospho-(1'-sn-glycerol).

It belongs to the Lgt family.

Its subcellular location is the cell inner membrane. It carries out the reaction L-cysteinyl-[prolipoprotein] + a 1,2-diacyl-sn-glycero-3-phospho-(1'-sn-glycerol) = an S-1,2-diacyl-sn-glyceryl-L-cysteinyl-[prolipoprotein] + sn-glycerol 1-phosphate + H(+). The protein operates within protein modification; lipoprotein biosynthesis (diacylglyceryl transfer). Catalyzes the transfer of the diacylglyceryl group from phosphatidylglycerol to the sulfhydryl group of the N-terminal cysteine of a prolipoprotein, the first step in the formation of mature lipoproteins. This is Phosphatidylglycerol--prolipoprotein diacylglyceryl transferase from Helicobacter pylori (strain G27).